Reading from the N-terminus, the 202-residue chain is IPVTKLGRLVKDMKIKSLEEIYLFSLPIKESEIIDFFLGASLKDEVLKIMPVQKQTRAGQRTRFKAFVAIGDYNGHVGLGVKCSKEVATAIRGAIILAKLSIVPVRRGYWGNKIGKPHTVPCKVTGRCGSVLVRLIPAPRGTGIVSAPVPKKLLMMAGIDDCYTSARGCTATLGNFAKATFDAISKTYSYLTPDLWKETVFT.

In terms of domain architecture, S5 DRBM spans 42–105 (LKDEVLKIMP…ILAKLSIVPV (64 aa)). Thr-192 is modified (phosphothreonine).

Belongs to the universal ribosomal protein uS5 family. In terms of assembly, component of the small ribosomal subunit. Interacts with zinc finger protein ZNF277 (via zinc-finger domains); the interaction is direct; the interaction is extra-ribosomal. Interaction with ZNF277 competes with the binding of RPS2 to protein arginine methyltransferase PRMT3. Citrullinated by PADI4 in the Arg/Gly-rich region. Post-translationally, asymmetric arginine dimethylation by PRMT3 occurs at multiple sites in the Arg/Gly-rich region. In terms of processing, monoubiquitinated by RNF10 when a ribosome has stalled during translation, leading to its degradation by the proteasome. Deubiquitinated by USP10, preventing degradation by the proteasome and promoting 40S ribosome subunit recycling following ribosome dissociation.

The protein resides in the cytoplasm. It localises to the nucleus. It is found in the nucleolus. In terms of biological role, component of the ribosome, a large ribonucleoprotein complex responsible for the synthesis of proteins in the cell. The small ribosomal subunit (SSU) binds messenger RNAs (mRNAs) and translates the encoded message by selecting cognate aminoacyl-transfer RNA (tRNA) molecules. The large subunit (LSU) contains the ribosomal catalytic site termed the peptidyl transferase center (PTC), which catalyzes the formation of peptide bonds, thereby polymerizing the amino acids delivered by tRNAs into a polypeptide chain. The nascent polypeptides leave the ribosome through a tunnel in the LSU and interact with protein factors that function in enzymatic processing, targeting, and the membrane insertion of nascent chains at the exit of the ribosomal tunnel. Plays a role in the assembly and function of the 40S ribosomal subunit. Mutations in this protein affects the control of translational fidelity. Involved in nucleolar processing of pre-18S ribosomal RNA and ribosome assembly. In Cricetulus griseus (Chinese hamster), this protein is Small ribosomal subunit protein uS5 (RPS2).